Consider the following 948-residue polypeptide: FRIGIDA-like protein 5 (948 aa).

A coiled-coil region spans residues D47–A164. Disordered stretches follow at residues E447–Q500, V518–E538, and R804–H894. Composition is skewed to basic and acidic residues over residues S459–A475 and V518–P527. A compositionally biased stretch (low complexity) spans S807–S817. The segment covering K818–K830 has biased composition (polar residues). The span at F861–S872 shows a compositional bias: basic residues. The span at M873 to H894 shows a compositional bias: polar residues.

The protein belongs to the Frigida family. As to expression, expressed at low levels during seed development.

In Arabidopsis thaliana (Mouse-ear cress), this protein is FRIGIDA-like protein 5 (FRL5).